The following is a 252-amino-acid chain: 7-carboxy-7-deazaguanine synthase (252 aa).

Substrate-binding positions include 22 to 24 and Arg37; that span reads LQG. The region spanning 28-251 is the Radical SAM core domain; the sequence is FVGEPQAFVR…QVHKLVDFIP (224 aa). [4Fe-4S] cluster contacts are provided by Cys41, Cys45, and Cys48. Thr102 lines the substrate pocket. Gly104 serves as a coordination point for S-adenosyl-L-methionine.

The protein belongs to the radical SAM superfamily. 7-carboxy-7-deazaguanine synthase family. Homodimer. [4Fe-4S] cluster serves as cofactor. It depends on S-adenosyl-L-methionine as a cofactor. Requires Mg(2+) as cofactor.

The catalysed reaction is 6-carboxy-5,6,7,8-tetrahydropterin + H(+) = 7-carboxy-7-deazaguanine + NH4(+). It participates in purine metabolism; 7-cyano-7-deazaguanine biosynthesis. Catalyzes the complex heterocyclic radical-mediated conversion of 6-carboxy-5,6,7,8-tetrahydropterin (CPH4) to 7-carboxy-7-deazaguanine (CDG), a step common to the biosynthetic pathways of all 7-deazapurine-containing compounds. The sequence is that of 7-carboxy-7-deazaguanine synthase from Methanopyrus kandleri (strain AV19 / DSM 6324 / JCM 9639 / NBRC 100938).